Consider the following 584-residue polypeptide: Kinesin-like protein KIN-10C (584 aa).

Residues 11–324 enclose the Kinesin motor domain; the sequence is PVRVVLRVRP…VSLAARSRHV (314 aa). Residue 99–106 coordinates ATP; sequence GATGSGKT. Disordered stretches follow at residues 377–398 and 445–469; these read SMSH…AMDQ and DKTG…KQRT.

Belongs to the TRAFAC class myosin-kinesin ATPase superfamily. Kinesin family. KIN-10 subfamily.

In Oryza sativa subsp. japonica (Rice), this protein is Kinesin-like protein KIN-10C.